A 330-amino-acid polypeptide reads, in one-letter code: Glycerol-3-phosphate dehydrogenase [NAD(P)+] (330 aa).

Residues Ser10, Trp11, Arg31, and Lys105 each coordinate NADPH. Sn-glycerol 3-phosphate contacts are provided by Lys105, Gly135, and Ser137. Residue Ala139 coordinates NADPH. Sn-glycerol 3-phosphate contacts are provided by Lys190, Asp243, Ser253, Arg254, and Asn255. Catalysis depends on Lys190, which acts as the Proton acceptor. Arg254 is an NADPH binding site. NADPH is bound by residues Val278 and Glu280.

It belongs to the NAD-dependent glycerol-3-phosphate dehydrogenase family.

The protein localises to the cytoplasm. The catalysed reaction is sn-glycerol 3-phosphate + NAD(+) = dihydroxyacetone phosphate + NADH + H(+). The enzyme catalyses sn-glycerol 3-phosphate + NADP(+) = dihydroxyacetone phosphate + NADPH + H(+). Its pathway is membrane lipid metabolism; glycerophospholipid metabolism. In terms of biological role, catalyzes the reduction of the glycolytic intermediate dihydroxyacetone phosphate (DHAP) to sn-glycerol 3-phosphate (G3P), the key precursor for phospholipid synthesis. In Nitratidesulfovibrio vulgaris (strain DP4) (Desulfovibrio vulgaris), this protein is Glycerol-3-phosphate dehydrogenase [NAD(P)+].